Reading from the N-terminus, the 90-residue chain is uncharacterized protein (90 aa).

This is an uncharacterized protein from Bacillus subtilis (strain 168).